The following is a 288-amino-acid chain: Transmembrane protein 163 (288 aa).

Basic and acidic residues predominate over residues 1–11 (MERAPGSERRS). Residues 1–64 (MERAPGSERR…ESGQFSDGFE (64 aa)) form a disordered region. At 1 to 87 (MERAPGSERR…HEAQNYRKKA (87 aa)) the chain is on the cytoplasmic side. Position 11 is a phosphoserine (serine 11). A compositionally biased stretch (pro residues) spans 12–24 (PPGPGVPRPPPRG). Residues 25–42 (HAPSTAAPAPNPAPLSSS) show a composition bias toward low complexity. The interval 41–71 (SSMQPDEERQPRISESGQFSDGFEDRGLLES) is required for interaction with MCOLN1. A phosphoserine mark is found at serine 54, serine 56, and serine 60. Residues 88 to 108 (LWVSWLSIIVTLALAVAAFTV) form a helical membrane-spanning segment. Topologically, residues 109 to 115 (SVMRYSA) are extracellular. A helical transmembrane segment spans residues 116–136 (SAFGFAFDAILDVLSSAIVLW). Topologically, residues 137–149 (RYSNAAAVHSAHR) are cytoplasmic. A helical membrane pass occupies residues 150 to 170 (EYIACVILGVIFLLSSICIVV). Residues 171–186 (KAIHDLSTRLLPEVDD) lie on the Extracellular side of the membrane. Residues 187–207 (FLFSVSILSGILCSVLAVLKF) form a helical membrane-spanning segment. Over 208-216 (MLGKVLTSR) the chain is Cytoplasmic. The chain crosses the membrane as a helical span at residues 217 to 237 (ALITDGFNSLVGGVMGFSILL). Residues 238-254 (SAEVFKHNAAVWYLDGS) lie on the Extracellular side of the membrane. Residues 255–275 (IGVLIGLTIFAYGVKLLIDMV) traverse the membrane as a helical segment. The Cytoplasmic segment spans residues 276–288 (PRVRQTRHYEMFE).

Belongs to the TMEM163 family. As to quaternary structure, homodimer. Interacts with MCOLN1. Interacts with SLC30A1, SLC30A2, SLC30A3 and SLC30A4. In terms of tissue distribution, strongly expressed in brain. Also detected in lung, liver, kidney and spleen. Mainly expressed in the glutaminergic neuron subpopulations.

The protein resides in the cytoplasmic vesicle. It localises to the secretory vesicle. Its subcellular location is the synaptic vesicle membrane. The protein localises to the early endosome membrane. It is found in the late endosome membrane. The protein resides in the lysosome membrane. It localises to the cell membrane. The enzyme catalyses Zn(2+)(in) = Zn(2+)(out). Its function is as follows. Zinc ion transporter that mediates zinc efflux and plays a crucial role in intracellular zinc homeostasis. Binds the divalent cations Zn(2+), Ni(2+), and to a minor extent Cu(2+). Is a functional modulator of P2X purinoceptors, including P2RX1, P2RX3, P2RX4 and P2RX7. Plays a role in central nervous system development and is required for myelination, and survival and proliferation of oligodendrocytes. This chain is Transmembrane protein 163 (Tmem163), found in Rattus norvegicus (Rat).